The chain runs to 500 residues: MELLTGHGLWPVAMFTVILILLVDLLHRRQRWASRYPPGPVPLPLLGNLLQVDLKNMQYSVHKLQQHYGDVFSLQMAWKHMVMINGLKAVREVLVNYGEYTADRPKIPIYEHGSLGPKARGVILAPYGPEWREQRRFSVSTLRNLGLGKKSLEQWVTDEAGHLCDAFKDQAGRPFNPSTLLNKAVCNVITSLIFARRFEYEDANLIRMLRLLEEALTNISGFIPEILNTFPVLLHIPGLFDKVFSGQKTFAAIVDNLLTENRRTWDPEQPPRGLTDAFLAEMEKAKGNPESSFNDQNLRMVVNDLFIAGTVSTSTTLSWALLFMIQYPDVQRRVQQEIDDILGPGRSPEMADQARMPYTNAVIHEVQRFADIAPLNLPCITSRDIEVQGFLIPKGTTLITNLSSVLKDETVWEKPLHFHPEHFLDAQGCFVKQEAFMPFSAGRRACLGEPLARMELFLFFTCLLQRFSFSVPAGQPRPSDHVVLGVLKSPAPYQLCAVPR.

A heme-binding site is contributed by Cys446.

The protein belongs to the cytochrome P450 family. Heme serves as cofactor.

The protein localises to the endoplasmic reticulum membrane. Its subcellular location is the microsome membrane. The protein is Cytochrome P450 2D28 (CYP2D28A) of Mesocricetus auratus (Golden hamster).